A 232-amino-acid polypeptide reads, in one-letter code: Small ribosomal subunit protein uS3 (232 aa).

The KH type-2 domain occupies 39 to 107; that stretch reads VRQYLTKALK…PAQINIAEVR (69 aa).

This sequence belongs to the universal ribosomal protein uS3 family. As to quaternary structure, part of the 30S ribosomal subunit. Forms a tight complex with proteins S10 and S14.

Its function is as follows. Binds the lower part of the 30S subunit head. Binds mRNA in the 70S ribosome, positioning it for translation. This Pseudoalteromonas atlantica (strain T6c / ATCC BAA-1087) protein is Small ribosomal subunit protein uS3.